Here is a 60-residue protein sequence, read N- to C-terminus: Large ribosomal subunit protein bL32 (60 aa).

The interval 1–60 (MAVQQNKKSPSKRGMHRSHDALTNPPLAIEPTTGETHLRHHISPNGFYRGKKVIKTKNDD) is disordered. Over residues 49 to 60 (RGKKVIKTKNDD) the composition is skewed to basic residues.

This sequence belongs to the bacterial ribosomal protein bL32 family.

This chain is Large ribosomal subunit protein bL32, found in Nitrosomonas eutropha (strain DSM 101675 / C91 / Nm57).